A 160-amino-acid chain; its full sequence is Ureidoglycolate lyase (160 aa).

Belongs to the ureidoglycolate lyase family. Homodimer. It depends on Ni(2+) as a cofactor.

The enzyme catalyses (S)-ureidoglycolate = urea + glyoxylate. Its pathway is nitrogen metabolism; (S)-allantoin degradation. Functionally, catalyzes the catabolism of the allantoin degradation intermediate (S)-ureidoglycolate, generating urea and glyoxylate. Involved in the anaerobic utilization of allantoin as sole nitrogen source. Reinforces the induction of genes involved in the degradation of allantoin and glyoxylate by producing glyoxylate. The chain is Ureidoglycolate lyase from Escherichia coli O139:H28 (strain E24377A / ETEC).